Reading from the N-terminus, the 591-residue chain is Potassium channel KAT4 (591 aa).

The Cytoplasmic segment spans residues Met1–Arg32. Residues Trp33–Leu53 form a helical membrane-spanning segment. Over Ser54–Leu63 the chain is Extracellular. The chain crosses the membrane as a helical span at residues Val64 to Val84. Topologically, residues Ala85–Pro109 are cytoplasmic. The helical transmembrane segment at Cys110–Gly130 threads the bilayer. Topologically, residues Lys131–Gly137 are extracellular. A helical; Voltage-sensor membrane pass occupies residues Leu138–Glu158. Over Lys159–Lys172 the chain is Cytoplasmic. The helical transmembrane segment at Leu173–Phe193 threads the bilayer. Residues Asn194–Thr220 are Extracellular-facing. Residues Cys221–Ala240 constitute an intramembrane region (pore-forming). Over Thr241–Met246 the chain is Extracellular. Residues Leu247 to Ile267 form a helical membrane-spanning segment. Residues Thr268–Ser591 are Cytoplasmic-facing. Leu349–Tyr469 lines the a nucleoside 3',5'-cyclic phosphate pocket. Residues Arg521 to Ser591 enclose the KHA domain.

The protein belongs to the potassium channel family. Plant (TC 1.A.1.4) subfamily.

It localises to the membrane. Its function is as follows. Probable inward-rectifying potassium channel. Assuming opened or closed conformations in response to the voltage difference across the membrane, the channel is activated by hyperpolarization. This is Potassium channel KAT4 from Oryza sativa subsp. japonica (Rice).